The chain runs to 149 residues: Ribonuclease H (149 aa).

One can recognise an RNase H type-1 domain in the interval 4–145 (QRGVVEAFTD…ADALANQGID (142 aa)). Mg(2+) contacts are provided by Asp-13, Glu-51, Asp-73, and Asp-137.

It belongs to the RNase H family. As to quaternary structure, monomer. Mg(2+) is required as a cofactor.

The protein resides in the cytoplasm. The catalysed reaction is Endonucleolytic cleavage to 5'-phosphomonoester.. Its function is as follows. Endonuclease that specifically degrades the RNA of RNA-DNA hybrids. This is Ribonuclease H from Halorhodospira halophila (strain DSM 244 / SL1) (Ectothiorhodospira halophila (strain DSM 244 / SL1)).